The sequence spans 321 residues: Lipoyl synthase (321 aa).

[4Fe-4S] cluster-binding residues include Cys-68, Cys-73, Cys-79, Cys-94, Cys-98, Cys-101, and Ser-308. A Radical SAM core domain is found at 80 to 297 (FNHGTATFMI…KAEALAMGFT (218 aa)).

The protein belongs to the radical SAM superfamily. Lipoyl synthase family. The cofactor is [4Fe-4S] cluster.

Its subcellular location is the cytoplasm. The enzyme catalyses [[Fe-S] cluster scaffold protein carrying a second [4Fe-4S](2+) cluster] + N(6)-octanoyl-L-lysyl-[protein] + 2 oxidized [2Fe-2S]-[ferredoxin] + 2 S-adenosyl-L-methionine + 4 H(+) = [[Fe-S] cluster scaffold protein] + N(6)-[(R)-dihydrolipoyl]-L-lysyl-[protein] + 4 Fe(3+) + 2 hydrogen sulfide + 2 5'-deoxyadenosine + 2 L-methionine + 2 reduced [2Fe-2S]-[ferredoxin]. Its pathway is protein modification; protein lipoylation via endogenous pathway; protein N(6)-(lipoyl)lysine from octanoyl-[acyl-carrier-protein]: step 2/2. In terms of biological role, catalyzes the radical-mediated insertion of two sulfur atoms into the C-6 and C-8 positions of the octanoyl moiety bound to the lipoyl domains of lipoate-dependent enzymes, thereby converting the octanoylated domains into lipoylated derivatives. The protein is Lipoyl synthase of Salmonella arizonae (strain ATCC BAA-731 / CDC346-86 / RSK2980).